A 236-amino-acid chain; its full sequence is WUSCHEL-related homeobox 4 (236 aa).

A DNA-binding region (homeobox; WUS-type) is located at residues 88 to 152 (AGTTRWNPSA…NHKARERQKQ (65 aa)). Residues 169–188 (PATANETKEAPEKKEKDVED) form a disordered region. The segment covering 174 to 187 (ETKEAPEKKEKDVE) has biased composition (basic and acidic residues).

The protein belongs to the WUS homeobox family.

The protein localises to the nucleus. Its function is as follows. Transcription factor which may be involved in developmental processes. The chain is WUSCHEL-related homeobox 4 (WOX4) from Oryza sativa subsp. indica (Rice).